Reading from the N-terminus, the 269-residue chain is Surfeit locus protein 4 (269 aa).

The next 5 membrane-spanning stretches (helical) occupy residues L64–V84, Y92–W112, F179–F199, L203–W223, and F239–G259. The Di-lysine motif motif lies at K266–W269.

This sequence belongs to the SURF4 family. As to quaternary structure, found in a complex composed at least of SURF4, TMED2 and TMED10. May interact with LMAN1. Interacts with ZFYVE27 and with KIF5A in a ZFYVE27-dependent manner. Interacts with STING1. Interacts with SAR1B. Interacts with TMEM41B.

It is found in the endoplasmic reticulum membrane. The protein localises to the endoplasmic reticulum-Golgi intermediate compartment membrane. It localises to the golgi apparatus membrane. Its function is as follows. Endoplasmic reticulum cargo receptor that mediates the export of lipoproteins by recruiting cargos into COPII vesicles to facilitate their secretion. Acts as a cargo receptor for lipoproteins bearing both APOB and APOA1, thereby regulating lipoprotein delivery and the maintenance of lipid homeostasis. Synergizes with the GTPase SAR1B to mediate transport of circulating lipoproteins. Promotes the secretion of PCSK9. Also mediates the efficient secretion of erythropoietin (EPO). May also play a role in the maintenance of the architecture of the endoplasmic reticulum-Golgi intermediate compartment and of the Golgi. The chain is Surfeit locus protein 4 from Homo sapiens (Human).